A 280-amino-acid polypeptide reads, in one-letter code: Large ribosomal subunit protein uL2 (280 aa).

The interval 223-280 (VVMNPVDHPHGGGEGRTSGGRHPVTPWGKPTKGARTRNKNKASSKLIIRSRHAKKKGR) is disordered. Positions 254–280 (KGARTRNKNKASSKLIIRSRHAKKKGR) are enriched in basic residues.

Belongs to the universal ribosomal protein uL2 family. In terms of assembly, part of the 50S ribosomal subunit. Forms a bridge to the 30S subunit in the 70S ribosome.

One of the primary rRNA binding proteins. Required for association of the 30S and 50S subunits to form the 70S ribosome, for tRNA binding and peptide bond formation. It has been suggested to have peptidyltransferase activity; this is somewhat controversial. Makes several contacts with the 16S rRNA in the 70S ribosome. The chain is Large ribosomal subunit protein uL2 from Dinoroseobacter shibae (strain DSM 16493 / NCIMB 14021 / DFL 12).